A 650-amino-acid chain; its full sequence is MIEENKHFEKKMQEYDASQIQVLEGLEAVRMRPGMYIGSTAKEGLHHLVWEIVDNSIDEALAGFASHIKVFIEADNSITVVDDGRGIPVDIQAKTGRPAVETVFTVLHAGGKFGGGGYKVSGGLHGVGSSVVNALSTQLDVRVYKNGQIHYQEFKRGAVVADLEVIGTTDVTGTTVHFTPDPEIFTETTQFDYSVLAKRIQELAFLNRGLKISITDKRSGMEQEEHFLYEGGIGSYVEFLNDKKDVIFETPIYTDGELEGIAVEVAMQYTTSYQETVMSFANNIHTHEGGTHEQGFRAALTRVINDYAKKNKILKENEDNLTGEDVREGLTAVISVKHPNPQFEGQTKTKLGNSEVVKITNRLFSEAFQRFLLENPQVARKIVEKGILASKARIAAKRAREVTRKKSGLEISNLPGKLADCSSNDANQNELFIVEGDSAGGSAKSGRNREFQAILPIRGKILNVEKATMDKILANEEIRSLFTAMGTGFGADFDVSKARYQKLVIMTDADVDGAHIRTLLLTLIYRFMRPVLEAGYVYIAQPPIYGVKVGSEIKEYIQPGIDQEDQLKTALEKYSIGRSKPTVQRYKGLGEMDDHQLWETTMDPENRLMARVTVDDAAEADKVFDMLMGDRVEPRRDFIEENAVYSTLDI.

The Toprim domain occupies 429–543 (NELFIVEGDS…AGYVYIAQPP (115 aa)). The Mg(2+) site is built by glutamate 435, aspartate 508, and aspartate 510.

The protein belongs to the type II topoisomerase GyrB family. As to quaternary structure, heterotetramer, composed of two GyrA and two GyrB chains. In the heterotetramer, GyrA contains the active site tyrosine that forms a transient covalent intermediate with DNA, while GyrB binds cofactors and catalyzes ATP hydrolysis. Mg(2+) is required as a cofactor. The cofactor is Mn(2+). It depends on Ca(2+) as a cofactor.

The protein resides in the cytoplasm. The enzyme catalyses ATP-dependent breakage, passage and rejoining of double-stranded DNA.. A type II topoisomerase that negatively supercoils closed circular double-stranded (ds) DNA in an ATP-dependent manner to modulate DNA topology and maintain chromosomes in an underwound state. Negative supercoiling favors strand separation, and DNA replication, transcription, recombination and repair, all of which involve strand separation. Also able to catalyze the interconversion of other topological isomers of dsDNA rings, including catenanes and knotted rings. Type II topoisomerases break and join 2 DNA strands simultaneously in an ATP-dependent manner. In Streptococcus pyogenes serotype M1, this protein is DNA gyrase subunit B.